A 106-amino-acid chain; its full sequence is Large ribosomal subunit protein uL24 (106 aa).

The protein belongs to the universal ribosomal protein uL24 family. Part of the 50S ribosomal subunit.

One of two assembly initiator proteins, it binds directly to the 5'-end of the 23S rRNA, where it nucleates assembly of the 50S subunit. Its function is as follows. One of the proteins that surrounds the polypeptide exit tunnel on the outside of the subunit. The protein is Large ribosomal subunit protein uL24 of Bordetella petrii (strain ATCC BAA-461 / DSM 12804 / CCUG 43448).